Consider the following 237-residue polypeptide: Ribosomal RNA small subunit methyltransferase G (237 aa).

S-adenosyl-L-methionine is bound by residues glycine 78, phenylalanine 83, 129–130 (AE), and arginine 148. Residues 216 to 237 (SKKKETPNKYPRKAGTPNKKPL) form a disordered region.

Belongs to the methyltransferase superfamily. RNA methyltransferase RsmG family.

Its subcellular location is the cytoplasm. Its function is as follows. Specifically methylates the N7 position of a guanine in 16S rRNA. The chain is Ribosomal RNA small subunit methyltransferase G from Streptococcus agalactiae serotype III (strain NEM316).